We begin with the raw amino-acid sequence, 118 residues long: V-type proton ATPase subunit G 2 (118 aa).

The interval 26–90 is disordered; that stretch reads RKRKARRLKQ…VQGMQSSQQR (65 aa). The segment covering 35–55 has biased composition (basic and acidic residues); sequence QAKEEAQMEVEQYRREREQEF. Composition is skewed to polar residues over residues 56–69 and 78–89; these read QSKQQAAMGSQGNL and RRQVQGMQSSQQ.

Belongs to the V-ATPase G subunit family. As to quaternary structure, V-ATPase is a heteromultimeric enzyme made up of two complexes: the ATP-hydrolytic V1 complex and the proton translocation V0 complex. The V1 complex consists of three catalytic AB heterodimers that form a heterohexamer, three peripheral stalks each consisting of EG heterodimers, one central rotor including subunits D and F, and the regulatory subunits C and H. The proton translocation complex V0 consists of the proton transport subunit a, a ring of proteolipid subunits c9c'', rotary subunit d, subunits e and f, and the accessory subunits ATP6AP1/Ac45 and ATP6AP2/PRR.

Its subcellular location is the melanosome. The protein localises to the cytoplasmic vesicle. The protein resides in the clathrin-coated vesicle membrane. Functionally, subunit of the V1 complex of vacuolar(H+)-ATPase (V-ATPase), a multisubunit enzyme composed of a peripheral complex (V1) that hydrolyzes ATP and a membrane integral complex (V0) that translocates protons. V-ATPase is responsible for acidifying and maintaining the pH of intracellular compartments and in some cell types, is targeted to the plasma membrane, where it is responsible for acidifying the extracellular environment. The chain is V-type proton ATPase subunit G 2 (ATP6V1G2) from Sus scrofa (Pig).